Here is a 230-residue protein sequence, read N- to C-terminus: MEKLLWCLLITISFSQAFGHEDMSKQAFVFPGVSATAYVSLEAESKKPLEAFTVCLYAHADVSRSFSIFSYATKTSFNEILLFWTRGQGFSIAVGGPEILFSASEIPEVPTHICATWESATGIVELWLDGKPRVRKSLQKGYIVGTNASIILGQEQDSYGGGFDANQSLVGDIGDVNMWDFVLSPEQINAVYVGRVFSPNVLNWRALKYETHGDVFIKPQLWPLTDCCES.

The first 19 residues, 1-19 (MEKLLWCLLITISFSQAFG), serve as a signal peptide directing secretion. The Pentraxin (PTX) domain occupies 24-223 (SKQAFVFPGV…DVFIKPQLWP (200 aa)). Cysteine 55 and cysteine 114 are disulfide-bonded. Asparagine 78 is a Ca(2+) binding site. The N-linked (GlcNAc...) asparagine glycan is linked to asparagine 147. Residues glutamate 155, glutamine 156, aspartate 157, and glutamine 167 each contribute to the Ca(2+) site. A disulfide bridge connects residues cysteine 227 and cysteine 228.

Belongs to the pentraxin family. As to quaternary structure, homopentamer; disulfide-linked. Pentraxin (or pentaxin) have a discoid arrangement of 5 non-covalently bound subunits. Two of the five chains form a dimer linked by two interchain disulfide bonds located in the C-terminal heptapeptide and specific to rat CRP. Interacts with FCN1; may regulate monocyte activation by FCN1. Requires Ca(2+) as cofactor. The last two cysteines are involved either in interchain disulfide bonds or in an intrachain bond. In terms of tissue distribution, found in plasma.

It localises to the secreted. Displays several functions associated with host defense: it promotes agglutination, bacterial capsular swelling, phagocytosis and complement fixation through its calcium-dependent binding to phosphorylcholine. Can interact with DNA and histones and may scavenge nuclear material released from damaged circulating cells. This chain is C-reactive protein (Crp), found in Rattus norvegicus (Rat).